Reading from the N-terminus, the 612-residue chain is 1-deoxy-D-xylulose-5-phosphate synthase (612 aa).

Residues His77 and 118–120 (GHS) contribute to the thiamine diphosphate site. Residue Asp147 participates in Mg(2+) binding. Thiamine diphosphate is bound by residues 148-149 (AA), Asn176, Tyr288, and Glu365. Asn176 is a binding site for Mg(2+).

The protein belongs to the transketolase family. DXPS subfamily. As to quaternary structure, homodimer. Mg(2+) serves as cofactor. Requires thiamine diphosphate as cofactor.

It catalyses the reaction D-glyceraldehyde 3-phosphate + pyruvate + H(+) = 1-deoxy-D-xylulose 5-phosphate + CO2. The protein operates within metabolic intermediate biosynthesis; 1-deoxy-D-xylulose 5-phosphate biosynthesis; 1-deoxy-D-xylulose 5-phosphate from D-glyceraldehyde 3-phosphate and pyruvate: step 1/1. Catalyzes the acyloin condensation reaction between C atoms 2 and 3 of pyruvate and glyceraldehyde 3-phosphate to yield 1-deoxy-D-xylulose-5-phosphate (DXP). In Malacoplasma penetrans (strain HF-2) (Mycoplasma penetrans), this protein is 1-deoxy-D-xylulose-5-phosphate synthase.